Here is a 452-residue protein sequence, read N- to C-terminus: Deoxybrevianamide E synthase notF (452 aa).

Residues 1-19 (MTAPELRVDTFRAPEDAPK) show a composition bias toward basic and acidic residues. The disordered stretch occupies residues 1–38 (MTAPELRVDTFRAPEDAPKEPSAQQPRLPSSPSPAQAL). Over residues 21–38 (PSAQQPRLPSSPSPAQAL) the composition is skewed to low complexity. E108 contributes to the brevianamide F binding site. 8 residues coordinate dimethylallyl diphosphate: R122, K212, Y214, K282, Y284, Y371, Y436, and Y440.

The protein belongs to the tryptophan dimethylallyltransferase family. As to quaternary structure, monomer.

It catalyses the reaction brevianamide F + dimethylallyl diphosphate = deoxybrevianamide E + diphosphate. It functions in the pathway alkaloid biosynthesis. Addition of 5 mM Mg(2+), Ca(2+) or Mn(2+) slightly enhances catalysis (about 100-120%). Significant reduction of enzyme activity (2%-35%) is observed with Cu(2+), Zn(2+), Fe(2+), or Sn(2+) (5 mM). Its function is as follows. Deoxybrevianamide E synthase; part of the gene cluster that mediates the biosynthesis of notoamide, a fungal indole alkaloid that belongs to a family of natural products containing a characteristic bicyclo[2.2.2]diazaoctane core. The first step of notoamide biosynthesis involves coupling of L-proline and L-tryptophan by the bimodular NRPS notE, to produce cyclo-L-tryptophan-L-proline called brevianamide F. The reverse prenyltransferase notF then acts as a deoxybrevianamide E synthase and converts brevianamide F to deoxybrevianamide E via reverse prenylation at C-2 of the indole ring leading to the bicyclo[2.2.2]diazaoctane core. Deoxybrevianamide E is further hydroxylated at C-6 of the indole ring, likely catalyzed by the cytochrome P450 monooxygenase notG, to yield 6-hydroxy-deoxybrevianamide E. 6-hydroxy-deoxybrevianamide E is a specific substrate of the prenyltransferase notC for normal prenylation at C-7 to produce 6-hydroxy-7-prenyl-deoxybrevianamide, also called notoamide S. As the proposed pivotal branching point in notoamide biosynthesis, notoamide S can be diverted to notoamide E through an oxidative pyran ring closure putatively catalyzed by either notH cytochrome P450 monooxygenase or the notD FAD-linked oxidoreductase. This step would be followed by an indole 2,3-epoxidation-initiated pinacol-like rearrangement catalyzed by the notB FAD-dependent monooxygenase leading to the formation of notoamide C and notoamide D. On the other hand notoamide S is converted to notoamide T by notH (or notD), a bifunctional oxidase that also functions as the intramolecular Diels-Alderase responsible for generation of (+)-notoamide T. To generate antipodal (-)-notoaminide T, notH' (or notD') in Aspergillus versicolor is expected to catalyze a Diels-Alder reaction leading to the opposite stereochemistry. The remaining oxidoreductase notD (or notH) likely catalyzes the oxidative pyran ring formation to yield (+)-stephacidin A. The FAD-dependent monooxygenase notI is highly similar to notB and is predicted to catalyze a similar conversion from (+)-stephacidin A to (-)-notoamide B via the 2,3-epoxidation of (+)-stephacidin A followed by a pinacol-type rearrangement. Finally, it remains unclear which enzyme could be responsible for the final hydroxylation steps leading to notoamide A and sclerotiamide. The polypeptide is Deoxybrevianamide E synthase notF (Aspergillus sp. (strain MF297-2)).